A 406-amino-acid chain; its full sequence is Cysteine desulfurase (406 aa).

The residue at position 226 (lysine 226) is an N6-(pyridoxal phosphate)lysine. Cysteine 364 functions as the Cysteine persulfide intermediate in the catalytic mechanism.

It belongs to the class-V pyridoxal-phosphate-dependent aminotransferase family. Csd subfamily. As to quaternary structure, homodimer. Interacts with SufE and the SufBCD complex composed of SufB, SufC and SufD. The interaction with SufE is required to mediate the direct transfer of the sulfur atom from the S-sulfanylcysteine. Pyridoxal 5'-phosphate serves as cofactor.

Its subcellular location is the cytoplasm. It carries out the reaction (sulfur carrier)-H + L-cysteine = (sulfur carrier)-SH + L-alanine. The enzyme catalyses L-selenocysteine + AH2 = hydrogenselenide + L-alanine + A + H(+). It participates in cofactor biosynthesis; iron-sulfur cluster biosynthesis. Cysteine desulfurases mobilize the sulfur from L-cysteine to yield L-alanine, an essential step in sulfur metabolism for biosynthesis of a variety of sulfur-containing biomolecules. Component of the suf operon, which is activated and required under specific conditions such as oxidative stress and iron limitation. Acts as a potent selenocysteine lyase in vitro, that mobilizes selenium from L-selenocysteine. Selenocysteine lyase activity is however unsure in vivo. The polypeptide is Cysteine desulfurase (Escherichia coli O45:K1 (strain S88 / ExPEC)).